Reading from the N-terminus, the 181-residue chain is Proteinase inhibitor B (181 aa).

The first 24 residues, 1-24 (MAASNALLLISGALLISLAVLCQG), serve as a signal peptide directing secretion. Disulfide bonds link C67–C113, C134–C143, and C136–C139.

This sequence belongs to the protease inhibitor I3 (leguminous Kunitz-type inhibitor) family.

Its subcellular location is the secreted. Its function is as follows. Possesses two reactive sites. Inhibits two molecules of trypsin simultaneously. Inhibits efficiently kallikrein, but chymotrypsin weakly. This Sagittaria sagittifolia (Arrowhead) protein is Proteinase inhibitor B.